Consider the following 1393-residue polypeptide: DNA-directed RNA polymerase subunit beta (1393 aa).

The protein belongs to the RNA polymerase beta chain family. As to quaternary structure, the RNAP catalytic core consists of 2 alpha, 1 beta, 1 beta' and 1 omega subunit. When a sigma factor is associated with the core the holoenzyme is formed, which can initiate transcription.

The enzyme catalyses RNA(n) + a ribonucleoside 5'-triphosphate = RNA(n+1) + diphosphate. Functionally, DNA-dependent RNA polymerase catalyzes the transcription of DNA into RNA using the four ribonucleoside triphosphates as substrates. The polypeptide is DNA-directed RNA polymerase subunit beta (Rhodospirillum rubrum (strain ATCC 11170 / ATH 1.1.1 / DSM 467 / LMG 4362 / NCIMB 8255 / S1)).